The chain runs to 144 residues: Alpha-crystallin (144 aa).

In terms of domain architecture, sHSP spans 33–143 (PTFDTRLMRL…TEKHIQIRST (111 aa)).

Belongs to the small heat shock protein (HSP20) family.

It localises to the secreted. It is found in the cell wall. The protein localises to the cytoplasm. Acts as a chaperone. The polypeptide is Alpha-crystallin (hspX) (Mycobacterium bovis (strain ATCC BAA-935 / AF2122/97)).